A 360-amino-acid chain; its full sequence is Nodulin-44 (360 aa).

Positions 1 to 23 (MEEKILMRVIVITVFLFIGAATA) are cleaved as a signal peptide. Disordered stretches follow at residues 123–148 (FSPR…VIPL) and 228–249 (FSPR…TLGR).

This sequence belongs to the nodulin 20 family.

The protein is Nodulin-44 of Glycine max (Soybean).